The chain runs to 264 residues: Methylthioribulose-1-phosphate dehydratase (264 aa).

Residue Cys110 participates in substrate binding. Positions 128 and 130 each coordinate Zn(2+). Glu151 functions as the Proton donor/acceptor in the catalytic mechanism. Position 213 (His213) interacts with Zn(2+).

This sequence belongs to the aldolase class II family. MtnB subfamily. Requires Zn(2+) as cofactor.

The protein localises to the cytoplasm. The catalysed reaction is 5-(methylsulfanyl)-D-ribulose 1-phosphate = 5-methylsulfanyl-2,3-dioxopentyl phosphate + H2O. It functions in the pathway amino-acid biosynthesis; L-methionine biosynthesis via salvage pathway; L-methionine from S-methyl-5-thio-alpha-D-ribose 1-phosphate: step 2/6. Functionally, catalyzes the dehydration of methylthioribulose-1-phosphate (MTRu-1-P) into 2,3-diketo-5-methylthiopentyl-1-phosphate (DK-MTP-1-P). This chain is Methylthioribulose-1-phosphate dehydratase, found in Vanderwaltozyma polyspora (strain ATCC 22028 / DSM 70294 / BCRC 21397 / CBS 2163 / NBRC 10782 / NRRL Y-8283 / UCD 57-17) (Kluyveromyces polysporus).